A 455-amino-acid polypeptide reads, in one-letter code: Outer capsid protein sigma-1 (455 aa).

The interval 1 to 307 (MDPRLREEVV…YPIADVSGGI (307 aa)) is tail. Residues 116-148 (LAELRVDHDNLVARVDTAERNIGSLTTELSTLT) adopt a coiled-coil conformation. N-linked (GlcNAc...) asparagine; by host glycosylation is found at Asn-231, Asn-264, and Asn-282. A head region spans residues 308-455 (GMSPNYRFRQ…MTVSYPRSFT (148 aa)).

Belongs to the orthoreovirus sigma-1 protein family. In terms of assembly, homotrimer. Interacts (via the head region) with human F11R. In terms of processing, undergoes dramatic conformational rearrangements during viral disassembly in the endocytic pathway.

It is found in the virion. Functionally, fiber-like molecule that attaches the virion to the host cell membrane by binding to the primary receptor F11R/JAM-A and to sialic acid containing proteins (coreceptor). The interaction of sigma-1 with F11R is required for NF-kB activation and apoptosis. Binding to both sialic acid and F11R is required to induce maximal levels of apoptosis. This chain is Outer capsid protein sigma-1 (S1), found in Reovirus type 3 (strain Dearing) (T3D).